Reading from the N-terminus, the 289-residue chain is ATP synthase gamma chain (289 aa).

It belongs to the ATPase gamma chain family. In terms of assembly, F-type ATPases have 2 components, CF(1) - the catalytic core - and CF(0) - the membrane proton channel. CF(1) has five subunits: alpha(3), beta(3), gamma(1), delta(1), epsilon(1). CF(0) has three main subunits: a, b and c.

The protein localises to the cell inner membrane. Its function is as follows. Produces ATP from ADP in the presence of a proton gradient across the membrane. The gamma chain is believed to be important in regulating ATPase activity and the flow of protons through the CF(0) complex. This Haemophilus influenzae (strain PittEE) protein is ATP synthase gamma chain.